The sequence spans 426 residues: Histidine--tRNA ligase (426 aa).

The protein belongs to the class-II aminoacyl-tRNA synthetase family.

The protein localises to the cytoplasm. It carries out the reaction tRNA(His) + L-histidine + ATP = L-histidyl-tRNA(His) + AMP + diphosphate + H(+). The sequence is that of Histidine--tRNA ligase from Sulfurisphaera tokodaii (strain DSM 16993 / JCM 10545 / NBRC 100140 / 7) (Sulfolobus tokodaii).